An 86-amino-acid polypeptide reads, in one-letter code: Synergistic-like venom protein (86 aa).

The first 21 residues, 1 to 21 (MKTLLLTLVVVTIVCLDLGYT), serve as a signal peptide directing secretion. Intrachain disulfides connect Cys-24–Cys-45, Cys-38–Cys-63, Cys-67–Cys-78, and Cys-79–Cys-84.

This sequence belongs to the three-finger toxin family. Short-chain subfamily. Aminergic toxin sub-subfamily. Expressed by the venom gland.

The protein localises to the secreted. The protein is Synergistic-like venom protein of Dendroaspis angusticeps (Eastern green mamba).